A 151-amino-acid polypeptide reads, in one-letter code: Deoxyuridine 5'-triphosphate nucleotidohydrolase (151 aa).

Substrate-binding positions include Arg-70–Gly-72, Asn-83, Leu-87–Asp-89, and Met-97.

Belongs to the dUTPase family. Mg(2+) is required as a cofactor.

It catalyses the reaction dUTP + H2O = dUMP + diphosphate + H(+). It functions in the pathway pyrimidine metabolism; dUMP biosynthesis; dUMP from dCTP (dUTP route): step 2/2. Its function is as follows. This enzyme is involved in nucleotide metabolism: it produces dUMP, the immediate precursor of thymidine nucleotides and it decreases the intracellular concentration of dUTP so that uracil cannot be incorporated into DNA. This Stutzerimonas stutzeri (strain A1501) (Pseudomonas stutzeri) protein is Deoxyuridine 5'-triphosphate nucleotidohydrolase.